Consider the following 93-residue polypeptide: Cell division topological specificity factor (93 aa).

It belongs to the MinE family.

Its function is as follows. Prevents the cell division inhibition by proteins MinC and MinD at internal division sites while permitting inhibition at polar sites. This ensures cell division at the proper site by restricting the formation of a division septum at the midpoint of the long axis of the cell. The chain is Cell division topological specificity factor from Halorhodospira halophila (strain DSM 244 / SL1) (Ectothiorhodospira halophila (strain DSM 244 / SL1)).